The chain runs to 477 residues: Putative WAS protein family homolog 4 (477 aa).

The interval 1-180 is WHD1; the sequence is MSGVMCLKAS…EGLGGLPSNI (180 aa). Disordered stretches follow at residues 310 to 420 and 434 to 477; these read QDGV…QGGH and KGIS…DWES. The span at 315–327 shows a compositional bias: pro residues; the sequence is TPPPPPPPPPPAP. Residues 362–477 form a VCA region; sequence QGAPREVVDP…QAEDEDDWES (116 aa). Residues 374–396 form the WH2 domain; sequence GWATLLESIRQAGGIGKAKLRSM. Residues 395–411 are compositionally biased toward basic and acidic residues; the sequence is SMKERKLEKQQQKEQEQ. Residues 437 to 449 are compositionally biased toward gly residues; it reads SGKGPGAGDGPGG.

The protein belongs to the WASH1 family. As to quaternary structure, interacts (via WHD1 region) with WASHC2C; the interaction is direct.

It localises to the early endosome membrane. It is found in the recycling endosome membrane. May act as a nucleation-promoting factor at the surface of endosomes, where it recruits and activates the Arp2/3 complex to induce actin polymerization, playing a key role in the fission of tubules that serve as transport intermediates during endosome sorting. This chain is Putative WAS protein family homolog 4 (WASH4P), found in Homo sapiens (Human).